The following is a 222-amino-acid chain: UPF0502 protein XCC4136 (222 aa).

Belongs to the UPF0502 family.

In Xanthomonas campestris pv. campestris (strain ATCC 33913 / DSM 3586 / NCPPB 528 / LMG 568 / P 25), this protein is UPF0502 protein XCC4136.